A 215-amino-acid polypeptide reads, in one-letter code: Cytochrome b6 (215 aa).

The chain crosses the membrane as a helical span at residues 32–52 (IFHCLGGITLTCFLVQVATGF). Residue C35 participates in heme c binding. Heme b-binding residues include H86 and H100. 3 consecutive transmembrane segments (helical) span residues 90-110 (ASMMVLMMILHVFRVYLTGGF), 116-136 (LTWVTGVVLAVLTASFGVTGY), and 186-206 (LHTFVLPLLTAVFMLMHFPMI). Heme b-binding residues include H187 and H202.

It belongs to the cytochrome b family. PetB subfamily. As to quaternary structure, the 4 large subunits of the cytochrome b6-f complex are cytochrome b6, subunit IV (17 kDa polypeptide, PetD), cytochrome f and the Rieske protein, while the 4 small subunits are PetG, PetL, PetM and PetN. The complex functions as a dimer. Heme b serves as cofactor. The cofactor is heme c.

It localises to the plastid. It is found in the chloroplast thylakoid membrane. Its function is as follows. Component of the cytochrome b6-f complex, which mediates electron transfer between photosystem II (PSII) and photosystem I (PSI), cyclic electron flow around PSI, and state transitions. The protein is Cytochrome b6 of Calycanthus floridus var. glaucus (Eastern sweetshrub).